The chain runs to 346 residues: Membrane progestin receptor alpha (346 aa).

Topologically, residues 1 to 72 are cytoplasmic; sequence MAMAQKLSHL…RTLFQQHNEA (72 aa). A helical transmembrane segment spans residues 73–93; the sequence is VNVWTHLLAALVLLLRLALFV. Residues 94–103 are Extracellular-facing; that stretch reads ETVDFWGDPH. The chain crosses the membrane as a helical span at residues 104-124; it reads ALPLFIIVLASFTYLSFSALA. Residues 125–137 are Cytoplasmic-facing; the sequence is HLLQAKSEFWHYS. The chain crosses the membrane as a helical span at residues 138–158; it reads FFFLDYVGVAVYQFGSALAHF. Topologically, residues 159–169 are extracellular; it reads YYAIEPAWHAQ. A helical transmembrane segment spans residues 170–190; sequence VQAVFLPMAAFLAWLSCIGSC. At 191 to 237 the chain is on the cytoplasmic side; sequence YNKYIQKPGLLGRTCQEVPSVLAYALDISPVVHRIFVSSDPTTDDPA. The chain crosses the membrane as a helical span at residues 238–258; the sequence is LLYHKCQVVFFLLAAAFFSTF. Topologically, residues 259–276 are extracellular; it reads MPERWFPGSCHVFGQGHQ. The chain crosses the membrane as a helical span at residues 277-297; sequence LFHIFLVLCTLAQLEAVALDY. Over 298 to 316 the chain is Cytoplasmic; that stretch reads EARRPIYEPLHTHWPHNFS. A helical transmembrane segment spans residues 317-337; that stretch reads GLFLLTVGSSILTAFLLSQLV. Over 338-346 the chain is Extracellular; the sequence is QRKLDQKTK.

Belongs to the ADIPOR family. In terms of tissue distribution, expressed in a wide range of tissues including ovary, testis, placenta, uterus and bladder.

The protein localises to the cell membrane. Plasma membrane progesterone (P4) receptor coupled to G proteins. Seems to act through a G(i) mediated pathway. May be involved in oocyte maturation. Involved in neurosteroid inhibition of apoptosis. Also binds dehydroepiandrosterone (DHEA), pregnanolone, pregnenolone and allopregnanolone. The polypeptide is Membrane progestin receptor alpha (Homo sapiens (Human)).